Consider the following 460-residue polypeptide: Orexin receptor type 2 (460 aa).

The Extracellular segment spans residues Met1–Glu54. 2 N-linked (GlcNAc...) asparagine glycosylation sites follow: Asn14 and Asn22. Residues Asp33–His49 form a required for response to orexin-A region. The helical transmembrane segment at Trp55 to Val75 threads the bilayer. Topologically, residues Cys76–Val88 are cytoplasmic. Residues Thr89 to Ala110 form a helical membrane-spanning segment. Over Thr111–Cys127 the chain is Extracellular. Cys127 and Cys210 are oxidised to a cystine. A helical membrane pass occupies residues Lys128 to Leu150. Topologically, residues Asp151–Arg170 are cytoplasmic. Residues Asn171 to Met191 form a helical membrane-spanning segment. Topologically, residues Glu192 to Met222 are extracellular. Asn202 carries N-linked (GlcNAc...) asparagine glycosylation. A helical transmembrane segment spans residues Tyr223 to Tyr243. Topologically, residues Leu244 to Arg304 are cytoplasmic. Residues Met305 to Leu326 traverse the membrane as a helical segment. Residues Lys327 to Val342 lie on the Extracellular side of the membrane. Residues Tyr343–Phe366 form a helical membrane-spanning segment. At Leu367–Val460 the chain is on the cytoplasmic side.

This sequence belongs to the G-protein coupled receptor 1 family. In terms of tissue distribution, widely expressed. Isoform 2 not detected in skeletal muscle and kidney.

The protein localises to the cell membrane. Nonselective, high-affinity receptor for both orexin-A and orexin-B neuropeptides. Triggers an increase in cytoplasmic Ca(2+) levels in response to orexin-A binding. The polypeptide is Orexin receptor type 2 (Hcrtr2) (Mus musculus (Mouse)).